We begin with the raw amino-acid sequence, 122 residues long: S-adenosylmethionine decarboxylase proenzyme (122 aa).

Residue S69 is the Schiff-base intermediate with substrate; via pyruvic acid of the active site. At S69 the chain carries Pyruvic acid (Ser); by autocatalysis. H74 functions as the Proton acceptor; for processing activity in the catalytic mechanism. The active-site Proton donor; for catalytic activity is the C89.

This sequence belongs to the prokaryotic AdoMetDC family. Type 1 subfamily. As to quaternary structure, heterotetramer of two alpha and two beta chains arranged as a dimer of alpha/beta heterodimers. It depends on pyruvate as a cofactor. In terms of processing, is synthesized initially as an inactive proenzyme. Formation of the active enzyme involves a self-maturation process in which the active site pyruvoyl group is generated from an internal serine residue via an autocatalytic post-translational modification. Two non-identical subunits are generated from the proenzyme in this reaction, and the pyruvate is formed at the N-terminus of the alpha chain, which is derived from the carboxyl end of the proenzyme. The post-translation cleavage follows an unusual pathway, termed non-hydrolytic serinolysis, in which the side chain hydroxyl group of the serine supplies its oxygen atom to form the C-terminus of the beta chain, while the remainder of the serine residue undergoes an oxidative deamination to produce ammonia and the pyruvoyl group blocking the N-terminus of the alpha chain.

The catalysed reaction is S-adenosyl-L-methionine + H(+) = S-adenosyl 3-(methylsulfanyl)propylamine + CO2. Its pathway is amine and polyamine biosynthesis; S-adenosylmethioninamine biosynthesis; S-adenosylmethioninamine from S-adenosyl-L-methionine: step 1/1. Catalyzes the decarboxylation of S-adenosylmethionine to S-adenosylmethioninamine (dcAdoMet), the propylamine donor required for the synthesis of the polyamines spermine and spermidine from the diamine putrescine. The sequence is that of S-adenosylmethionine decarboxylase proenzyme from Saccharolobus islandicus (strain L.S.2.15 / Lassen #1) (Sulfolobus islandicus).